The sequence spans 146 residues: Snaclec CTL-Eoc124 (146 aa).

The first 23 residues, 1-23 (MGRFISVSFGLLVVFLSLSGTGA), serve as a signal peptide directing secretion. Disulfide bonds link Cys25–Cys36, Cys53–Cys142, and Cys119–Cys134. Positions 32 to 143 (YQGHCYRVFN…CSRTNNVACK (112 aa)) constitute a C-type lectin domain.

Belongs to the snaclec family. Heterodimer; disulfide-linked. Expressed by the venom gland.

It is found in the secreted. Its function is as follows. Interferes with one step of hemostasis (modulation of platelet aggregation, or coagulation cascade, for example). The protein is Snaclec CTL-Eoc124 of Echis ocellatus (Ocellated saw-scaled viper).